The chain runs to 123 residues: Small ribosomal subunit protein uS13c (123 aa).

Residues 99 to 123 are disordered; it reads GQRTRSNARTRRGAKKTVAGKKLAK. Over residues 100-123 the composition is skewed to basic residues; that stretch reads QRTRSNARTRRGAKKTVAGKKLAK.

This sequence belongs to the universal ribosomal protein uS13 family. As to quaternary structure, part of the 30S ribosomal subunit.

It localises to the plastid. The protein resides in the chloroplast. In terms of biological role, located at the top of the head of the 30S subunit, it contacts several helices of the 16S rRNA. The protein is Small ribosomal subunit protein uS13c of Cyanidioschyzon merolae (strain NIES-3377 / 10D) (Unicellular red alga).